A 660-amino-acid chain; its full sequence is Phosphatidylinositol-3-phosphate phosphatase MTMR7 (660 aa).

The 379-residue stretch at 126-504 (GWVLIDLSEE…FMYKFWSGMY (379 aa)) folds into the Myotubularin phosphatase domain. 3 residues coordinate a 1,2-diacyl-sn-glycero-3-phospho-(1D-myo-inositol-3-phosphate): asparagine 250, asparagine 275, and isoleucine 276. Cysteine 338 acts as the Phosphocysteine intermediate in catalysis. Residues serine 339, aspartate 340, glycine 341, tryptophan 342, aspartate 343, arginine 344, and arginine 384 each coordinate a 1,2-diacyl-sn-glycero-3-phospho-(1D-myo-inositol-3-phosphate). A coiled-coil region spans residues 514–558 (RQSVTDYLMAVKEETQQLEEELEALEERLEKIQKVQLNCTKVKSK). The tract at residues 554–660 (KVKSKQSEPS…DSDEAVFLTA (107 aa)) is disordered. The span at 566-596 (SGFSTSDNSIANTPQDYSGNMKSFPSRSPSQ) shows a compositional bias: polar residues. Threonine 578 carries the post-translational modification Phosphothreonine. Residues 641 to 653 (APSEDSGKDRDSD) show a composition bias toward basic and acidic residues.

It belongs to the protein-tyrosine phosphatase family. Non-receptor class myotubularin subfamily. As to quaternary structure, heterodimer (via C-terminus) with MTMR9 (via coiled coil domain); the interaction enhances MTMR7 catalytic activity. Does not homodimerize. Interacts with RAB1B (in GDP-bound form).

It localises to the cytoplasm. The protein resides in the endomembrane system. The catalysed reaction is a 1,2-diacyl-sn-glycero-3-phospho-(1D-myo-inositol-3-phosphate) + H2O = a 1,2-diacyl-sn-glycero-3-phospho-(1D-myo-inositol) + phosphate. It carries out the reaction 1D-myo-inositol 1,3-bisphosphate + H2O = 1D-myo-inositol 1-phosphate + phosphate. With respect to regulation, interaction with MTMR9 increases phosphatase activity. Lipid phosphatase that specifically dephosphorylates the D-3 position of phosphatidylinositol 3-phosphate (PtdIns(3)P) and inositol 1,3-bisphosphate (Ins(1,3)P2). This Pongo abelii (Sumatran orangutan) protein is Phosphatidylinositol-3-phosphate phosphatase MTMR7.